We begin with the raw amino-acid sequence, 348 residues long: NAC domain-containing protein 101 (348 aa).

One can recognise an NAC domain in the interval 7–156; that stretch reads IPPGYRFHPT…GWVVCRAFKK (150 aa). The DNA-binding element occupies 107–162; sequence VGMRKTLVFYKGRAPNGQKSDWIMHEYRLETDENGPPHEEGWVVCRAFKKKLTTMN. The disordered stretch occupies residues 325 to 348; that stretch reads MVSMNASSSSSPCSFYSWAQNTHT. Over residues 327 to 341 the composition is skewed to low complexity; sequence SMNASSSSSPCSFYS.

It belongs to the plant vascular related NAC-domain protein family. Homodimer. As to expression, expressed in root inner metaxylem vessels and in hypocotyl vessels. Present in root developing xylems. Accumulates in the xylem but not in interfascicular fibers or pith cells in inflorescence stems. Absent from secondary xylem in roots.

It localises to the nucleus. In terms of biological role, transcription activator that binds to the secondary wall NAC binding element (SNBE), 5'-(T/A)NN(C/T)(T/C/G)TNNNNNNNA(A/C)GN(A/C/T)(A/T)-3', and to the tracheary elements (TE) specific regulating cis-element (TERE), 5'-CTTNAAAGCNA-3', in the promoter of target genes (e.g. genes involved in secondary wall biosynthesis, cell wall modification such as xylan accumulation, and programmed cell death). Involved in xylem formation in roots and shoots, especially regulating metaxylem vessel differentiation by promoting immature xylem vessel-specific genes expression, especially genes regulating programmed cell death (PCD) and secondary wall formation in tracheary elements (TE). Can activate MYB25, MYB46, MYB58, MYB63, MYB83, MYB103, CESA4, LBD15, LBD30, ERF115, XCP1, XCP2, NAC010/SND3, KNAT7, ASL19 and ASL20 expression. This chain is NAC domain-containing protein 101, found in Arabidopsis thaliana (Mouse-ear cress).